The sequence spans 148 residues: Large ribosomal subunit protein uL15 (148 aa).

A disordered region spans residues 1–57 (MRLNDVKPQKGSKKRRRRVGRGISAGQGASAGLGMRGQKSRSGSGTRPGFEGGQQPL). The span at 10 to 20 (KGSKKRRRRVG) shows a compositional bias: basic residues. Residues 23-35 (ISAGQGASAGLGM) are compositionally biased toward gly residues.

Belongs to the universal ribosomal protein uL15 family. In terms of assembly, part of the 50S ribosomal subunit.

In terms of biological role, binds to the 23S rRNA. The chain is Large ribosomal subunit protein uL15 from Trichormus variabilis (strain ATCC 29413 / PCC 7937) (Anabaena variabilis).